The following is a 202-amino-acid chain: NAD(P)H-quinone oxidoreductase chain 6 (202 aa).

Helical transmembrane passes span Val-9–Ala-29, Ile-32–Leu-52, Ala-61–Val-81, Val-98–Thr-118, and Phe-144–Ile-164.

Belongs to the complex I subunit 6 family.

It is found in the membrane. It carries out the reaction a plastoquinone + NADH + (n+1) H(+)(in) = a plastoquinol + NAD(+) + n H(+)(out). It catalyses the reaction a plastoquinone + NADPH + (n+1) H(+)(in) = a plastoquinol + NADP(+) + n H(+)(out). In terms of biological role, NDH-1 shuttles electrons from NAD(P)H, via FMN and iron-sulfur (Fe-S) centers, to quinones in the respiratory chain. The immediate electron acceptor for the enzyme in this species is believed to be plastoquinone. Couples the redox reaction to proton translocation (for every two electrons transferred, four hydrogen ions are translocated across the cytoplasmic membrane), and thus conserves the redox energy in a proton gradient. The chain is NAD(P)H-quinone oxidoreductase chain 6 (ndhG) from Nostoc sp. (strain PCC 7120 / SAG 25.82 / UTEX 2576).